Consider the following 620-residue polypeptide: MALLQIAEPGQSAAPHQHRLAVGIDLGTTNSLVAAVRSGETATLPDELGQHSLPSIVRYTQDSVEVGALAALSSAQDPQNTIVSVKRFMGRSLADIKAGEQSFPYEFAESENGLPLFVTPQGQVNPVQVSAEILRPLIARAEKTLGGELQGVVITVPAYFDDAQRQGTKDAAALLGVKVLRLLNEPTAAAIAYGLDSKQEGVIAIYDLGGGTFDISILRLNRGVFEVLATGGDSALGGDDFDHLLQAHMQQVWQLSDIDSQLSRQLLIESRRVKEALTDAAETEAKVILADGTELTQIVSKAEFDAMIAALVKKTIASCRRTLRDAGVTTDEVLETVMVGGSTRVPLVREQVEAFFGKPPLTSIDPDRVVAIGAAIQADILVGNKPESDLLLLDVIPLSLGIETMGGLVEKVVSRNTTIPVARAQEFTTFKDGQTAMAFHVVQGERELVADCRSLARFTLKGIPPLAAGAAHIRVTFQVDADGLLSVTAMEKSTGVQSSIQVKPSFGLSDTEIATMLKDSMKYAKDDIGRRMLAEQQVEAARVLESLHAALAKDGDLLNADERGQIDATMVNVAQVAAGDDADAIKLAIEKLDEQTQDFAARRMDNSIRVAFKGQSIDNI.

The protein belongs to the heat shock protein 70 family.

Chaperone involved in the maturation of iron-sulfur cluster-containing proteins. Has a low intrinsic ATPase activity which is markedly stimulated by HscB. This chain is Chaperone protein HscA homolog, found in Shewanella baltica (strain OS155 / ATCC BAA-1091).